Reading from the N-terminus, the 84-residue chain is MRWGRRDDRDTGKILRNRSRNRFNIYHYVSTVKKVKETERELLRLTQTWKAIRLISYNSVGISINRLTSRLIHKLHELLNGLIS.

In terms of biological role, this protein may be involved in virus assembly. This is an uncharacterized protein from Saccharolobus solfataricus (Sulfolobus solfataricus).